The primary structure comprises 490 residues: Tektin-3 (490 aa).

Residues Thr7 and Thr9 are each glycosylated (O-linked (GalNAc...) threonine). N-linked (GlcNAc...) asparagine glycosylation is found at Asn41, Asn86, Asn111, and Asn276. Residues Arg419–Glu456 are a coiled coil.

The protein belongs to the tektin family. As to quaternary structure, microtubule inner protein component of sperm flagellar doublet microtubules. Interacts with TEKT1, TEKT2, TEKT4 and TEKT5. Interacts with CCDC38. Post-translationally, N- and O-glycosylated. In terms of processing, may be proteolytically processed during the epididymal transit of spermatozoa. Ubiquitinated, leading to its degradation. Deubiquitinated by USP16, promoting its stability. In terms of tissue distribution, expressed in epididymal sperm (at protein level).

The protein resides in the cytoplasm. The protein localises to the cytoskeleton. It localises to the cilium axoneme. Its subcellular location is the flagellum axoneme. It is found in the cytoplasmic vesicle. The protein resides in the secretory vesicle. The protein localises to the acrosome outer membrane. Functionally, microtubule inner protein (MIP) part of the dynein-decorated doublet microtubules (DMTs) in cilia and flagellar axoneme. Forms filamentous polymers in the walls of ciliary and flagellar microtubules. Required for normal sperm mobility. The protein is Tektin-3 (Tekt3) of Rattus norvegicus (Rat).